The following is a 545-amino-acid chain: MAKEIIFSDEARNKLYEGVKKLNDAVKVTMGPRGRNVLIQKSFGAPSITKDGVSVAKEVELKDSLENMGASLVREVASKTADQAGDGTTTATVLAHAIFKEGLRNITAGANPIEVKRGMDKACEAIVAELKKLSREVKDKKEIAQVATISANSDEKIGNLIADAMEKVGKDGVITVEEAKSINDELNVVEGMQFDRGYLSPYFITNAEKMTVELSSPYILLFDKKIANLKDLLPVLEQIQKTGKPLLIIAEDIEGEALATLVVNKLRGVLNISAVKAPGFGDRRKAMLEDIAILTGGEVISEELGRTLESATIQDLGQASSVIIDKDNTTIVNGAGEKANIDARVNQIKAQIAETTSDYDREKLQERLAKLSGGVAVIKVGAATETEMKEKKDRVDDALSATKAAVEEGIVIGGGAALIKAKAKIKLDLQGDEAIGAAIVERALRAPLRQIAENAGFDAGVVVNSVENAKDENTGFDAAKGEYVNMLESGIIDPVKVERVALLNAVSVASMLLTTEATISEIKEDKPAMPDMSGMGGMGGMGGMM.

Residues 29–32, Lys-50, 86–90, Gly-414, 477–479, and Asp-493 each bind ATP; these read TMGP, DGTTT, and DAA.

It belongs to the chaperonin (HSP60) family. In terms of assembly, forms a cylinder of 14 subunits composed of two heptameric rings stacked back-to-back. Interacts with the co-chaperonin GroES.

Its subcellular location is the cytoplasm. The catalysed reaction is ATP + H2O + a folded polypeptide = ADP + phosphate + an unfolded polypeptide.. Together with its co-chaperonin GroES, plays an essential role in assisting protein folding. The GroEL-GroES system forms a nano-cage that allows encapsulation of the non-native substrate proteins and provides a physical environment optimized to promote and accelerate protein folding. This Campylobacter jejuni subsp. jejuni serotype O:6 (strain 81116 / NCTC 11828) protein is Chaperonin GroEL.